Consider the following 319-residue polypeptide: tRNA-cytidine(32) 2-sulfurtransferase (319 aa).

A PP-loop motif motif is present at residues 49-54 (SGGKDS). Residues Cys124, Cys127, and Cys215 each coordinate [4Fe-4S] cluster.

It belongs to the TtcA family. As to quaternary structure, homodimer. The cofactor is Mg(2+). It depends on [4Fe-4S] cluster as a cofactor.

The protein localises to the cytoplasm. The catalysed reaction is cytidine(32) in tRNA + S-sulfanyl-L-cysteinyl-[cysteine desulfurase] + AH2 + ATP = 2-thiocytidine(32) in tRNA + L-cysteinyl-[cysteine desulfurase] + A + AMP + diphosphate + H(+). It functions in the pathway tRNA modification. Catalyzes the ATP-dependent 2-thiolation of cytidine in position 32 of tRNA, to form 2-thiocytidine (s(2)C32). The sulfur atoms are provided by the cysteine/cysteine desulfurase (IscS) system. The protein is tRNA-cytidine(32) 2-sulfurtransferase of Shewanella amazonensis (strain ATCC BAA-1098 / SB2B).